Here is a 356-residue protein sequence, read N- to C-terminus: Histidinol-phosphate aminotransferase (356 aa).

At Lys-214 the chain carries N6-(pyridoxal phosphate)lysine.

Belongs to the class-II pyridoxal-phosphate-dependent aminotransferase family. Histidinol-phosphate aminotransferase subfamily. Homodimer. The cofactor is pyridoxal 5'-phosphate.

It catalyses the reaction L-histidinol phosphate + 2-oxoglutarate = 3-(imidazol-4-yl)-2-oxopropyl phosphate + L-glutamate. It participates in amino-acid biosynthesis; L-histidine biosynthesis; L-histidine from 5-phospho-alpha-D-ribose 1-diphosphate: step 7/9. The protein is Histidinol-phosphate aminotransferase of Escherichia coli (strain 55989 / EAEC).